A 607-amino-acid chain; its full sequence is MTLWEKVKNLPDSPGVYLYKDEKGEVIYVGKAKNLKNRVRSYFQPPEKLLPKTRVMMEKARDIEVIITSTEVEALILEQNLIKRYRPRYNILLKDDKSYPYLKITGEEFPRLLITRRVVNDGGRYFGPYPDAGALNETYKLLRSIFKFRTCTPTIFAQKKRPCLNFHIKKCSAPCAGEISREEYFKEIEMVVDFLEGRGENLIKKLKKEMAIASDNLEFERAAKLRDQILALEKILAKQKISRGQRNADVVVVANRENLGVGLIFVIRQGNLLGQKVYTFTGEMETGELLNQVLVTHYGEAKEVPVEIILSTRENLDEEFLNSWFELKFGKKPKFTVPKRGEKFELLKMALENVNFTLDEKIKLNEKKQLLNEKALMDLKEALNLPVVPRRIEGYDISHLAGTGTVASMVVFIDGEPVKGKYRRFAIRSAANDDYTAMFEAVLRRFKKYLALQEEGGADGSFEELPDLVLIDGGKGQLNAAMDALKETNLLGKFTVIALAKEQEEIFLPGKKDSLLLTQDREGLKLLQRVRDEAHRFARGYQEKKRVKTLASLLEQVEGIGPKRRKQLLNKFGSIKNLREATVEEITAVPGITREIAERLKELLEME.

The GIY-YIG domain maps to aspartate 12–isoleucine 91. Residues glutamate 200–isoleucine 235 enclose the UVR domain.

Belongs to the UvrC family. Interacts with UvrB in an incision complex.

It is found in the cytoplasm. The UvrABC repair system catalyzes the recognition and processing of DNA lesions. UvrC both incises the 5' and 3' sides of the lesion. The N-terminal half is responsible for the 3' incision and the C-terminal half is responsible for the 5' incision. This Carboxydothermus hydrogenoformans (strain ATCC BAA-161 / DSM 6008 / Z-2901) protein is UvrABC system protein C.